Reading from the N-terminus, the 402-residue chain is NADH-quinone oxidoreductase subunit D (402 aa).

The protein belongs to the complex I 49 kDa subunit family. As to quaternary structure, NDH-1 is composed of 14 different subunits. Subunits NuoB, C, D, E, F, and G constitute the peripheral sector of the complex.

It is found in the cell inner membrane. The enzyme catalyses a quinone + NADH + 5 H(+)(in) = a quinol + NAD(+) + 4 H(+)(out). Its function is as follows. NDH-1 shuttles electrons from NADH, via FMN and iron-sulfur (Fe-S) centers, to quinones in the respiratory chain. The immediate electron acceptor for the enzyme in this species is believed to be ubiquinone. Couples the redox reaction to proton translocation (for every two electrons transferred, four hydrogen ions are translocated across the cytoplasmic membrane), and thus conserves the redox energy in a proton gradient. The protein is NADH-quinone oxidoreductase subunit D of Xanthobacter autotrophicus (strain ATCC BAA-1158 / Py2).